A 323-amino-acid chain; its full sequence is Magnesium transporter NIPA1 (323 aa).

Topologically, residues 1–21 (MGTAAAAAAAGEGARGPSPAA) are extracellular. The helical transmembrane segment at 22–42 (VSLGLGVAVVSSLVNGSTFVL) threads the bilayer. The Cytoplasmic portion of the chain corresponds to 43–60 (QKKGIVRAKRRGTSYLTD). The helical transmembrane segment at 61–81 (IVWWAGTIAMAVGQIGNFLAY) threads the bilayer. T82 is a topological domain (extracellular). The chain crosses the membrane as a helical span at residues 83–103 (AVPTVLVTPLGALGVPFGSIL). Residues 104–111 (ASYLLKEK) are Cytoplasmic-facing. The helical transmembrane segment at 112-132 (LNILGKLGCLLSCAGSVVLII) threads the bilayer. Over 133-153 (HSPKSESVTTQAELEEKLTNP) the chain is Extracellular. The helical transmembrane segment at 154 to 174 (VFVGYLCIVLLMLLLLIFWIA) threads the bilayer. Residues 175-177 (PAH) are Cytoplasmic-facing. A helical membrane pass occupies residues 178–198 (GPTNIMVYISICSLLGSFTVP). The Extracellular segment spans residues 199–218 (STKGIGLAAQDILHNNPSSQ). Residues 219–239 (RALCLCLVLLAVLGCSIIVQF) traverse the membrane as a helical segment. The Cytoplasmic portion of the chain corresponds to 240-253 (RYINKALECFDSSV). A helical transmembrane segment spans residues 254 to 274 (FGAIYYVVFTTLVLLASAILF). The Extracellular portion of the chain corresponds to 275-284 (REWSNVGLVD). The helical transmembrane segment at 285 to 305 (FLGMACGFTTVSVGIVLIQVF) threads the bilayer. Residues 306–323 (KEFNFNLGEMNKSNMKTD) are Cytoplasmic-facing.

This sequence belongs to the NIPA family. In terms of assembly, homodimer. As to expression, widely expressed. Predominantly expressed in neuronal tissues. Brain, heart, kidney, liver and colon (at protein level).

The protein localises to the cell membrane. It is found in the early endosome. It carries out the reaction Mg(2+)(in) = Mg(2+)(out). Acts as a Mg(2+) transporter. Can also transport other divalent cations such as Fe(2+), Sr(2+), Ba(2+), Zn(2+) and Co(2+) but to a much less extent than Mg(2+). The sequence is that of Magnesium transporter NIPA1 (Nipa1) from Mus musculus (Mouse).